We begin with the raw amino-acid sequence, 437 residues long: UDP-N-acetylmuramoylalanine--D-glutamate ligase (437 aa).

Position 112–118 (112–118 (GSNGKST)) interacts with ATP.

Belongs to the MurCDEF family.

It localises to the cytoplasm. It carries out the reaction UDP-N-acetyl-alpha-D-muramoyl-L-alanine + D-glutamate + ATP = UDP-N-acetyl-alpha-D-muramoyl-L-alanyl-D-glutamate + ADP + phosphate + H(+). It functions in the pathway cell wall biogenesis; peptidoglycan biosynthesis. Functionally, cell wall formation. Catalyzes the addition of glutamate to the nucleotide precursor UDP-N-acetylmuramoyl-L-alanine (UMA). This Haemophilus influenzae (strain 86-028NP) protein is UDP-N-acetylmuramoylalanine--D-glutamate ligase.